A 197-amino-acid polypeptide reads, in one-letter code: NADH-quinone oxidoreductase subunit C (197 aa).

Belongs to the complex I 30 kDa subunit family. In terms of assembly, NDH-1 is composed of 14 different subunits. Subunits NuoB, C, D, E, F, and G constitute the peripheral sector of the complex.

It localises to the cell inner membrane. It catalyses the reaction a quinone + NADH + 5 H(+)(in) = a quinol + NAD(+) + 4 H(+)(out). Its function is as follows. NDH-1 shuttles electrons from NADH, via FMN and iron-sulfur (Fe-S) centers, to quinones in the respiratory chain. The immediate electron acceptor for the enzyme in this species is believed to be ubiquinone. Couples the redox reaction to proton translocation (for every two electrons transferred, four hydrogen ions are translocated across the cytoplasmic membrane), and thus conserves the redox energy in a proton gradient. The chain is NADH-quinone oxidoreductase subunit C from Neisseria meningitidis serogroup B (strain ATCC BAA-335 / MC58).